A 68-amino-acid polypeptide reads, in one-letter code: Ferredoxin Fdx (68 aa).

Residues cysteine 12, glutamine 13, alanine 16, cysteine 18, and cysteine 56 each contribute to the [3Fe-4S] cluster site.

The cofactor is [3Fe-4S] cluster.

In terms of biological role, ferredoxin that is the redox partner of cytochrome CYP51, a sterol 14alpha-demethylase encoded by an adjacent gene. The chain is Ferredoxin Fdx from Mycobacterium tuberculosis (strain ATCC 25618 / H37Rv).